The following is a 447-amino-acid chain: Na(+)/H(+) antiporter NhaA 2 (447 aa).

Transmembrane regions (helical) follow at residues 30-50, 81-101, 117-137, 146-166, 175-195, 199-219, 220-240, 315-335, 350-370, 383-403, and 415-435; these read FIHIESAAGIVLFISTLLAVL, LHKWVNDAGMTLFFFLIALEL, LLSIAAALGGMSTPPLFYLLL, GWGTVMATDTAFVIGCLALLG, IFMLSMAVVDDIGAIFVVAIG, AVDWLVLSYALLGFMLVRAMA, FLGVRSLVLFSIVGGAIWLVI, LLHPWVGFVVLPLFALANAGV, VFVGFVFGKPIGIVLFSWIAV, WGMVFGGGMLAGIGFTMALFI, and AAKLGIFIASITSALIGFLCL.

Belongs to the NhaA Na(+)/H(+) (TC 2.A.33) antiporter family.

Its subcellular location is the cell inner membrane. It carries out the reaction Na(+)(in) + 2 H(+)(out) = Na(+)(out) + 2 H(+)(in). Its function is as follows. Na(+)/H(+) antiporter that extrudes sodium in exchange for external protons. The sequence is that of Na(+)/H(+) antiporter NhaA 2 from Vibrio vulnificus (strain CMCP6).